Reading from the N-terminus, the 292-residue chain is Polyisoprenoid diphosphate/phosphate phosphohydrolase PLPP6 (292 aa).

Disordered stretches follow at residues 1–34 (MPSPRRTIEGRPLGSSGGSSVPGSPAHGGGSGGG) and 66–86 (GSFPLAASGPAQAAPAPPPED). Residues 1–131 (MPSPRRTIEG…SAWGSVRPLM (131 aa)) lie on the Cytoplasmic side of the membrane. The segment covering 10-25 (GRPLGSSGGSSVPGSP) has biased composition (low complexity). Phosphoserine occurs at positions 24 and 67. Positions 69 to 79 (PLAASGPAQAA) are enriched in low complexity. A helical membrane pass occupies residues 132 to 152 (KLLEISGHGIPWLLGTLYCLL). At 153–161 (RSDSWAGRE) the chain is on the lumenal side. The chain crosses the membrane as a helical span at residues 162–182 (VLMNLLFALLLDLLLVAVIKG). A phosphatase sequence motif I region spans residues 181 to 189 (KGLVRRRRP). Topologically, residues 183–225 (LVRRRRPAHNQKDMFFTLSVDRYSFPSGHATRAALVSRFILNH) are cytoplasmic. The interval 208–211 (PSGH) is phosphatase sequence motif II. The active-site Proton donors is His211. Residues 226–246 (LVLAIPLRVLVVLWAFVLGLS) form a helical membrane-spanning segment. The tract at residues 246–257 (SRVMLGRHNVTD) is phosphatase sequence motif III. Residues 247 to 257 (RVMLGRHNVTD) are Lumenal-facing. Catalysis depends on His253, which acts as the Nucleophile. Residues 258–278 (VAFGFFLGYMQYSIVDYCWLS) form a helical membrane-spanning segment. The Cytoplasmic portion of the chain corresponds to 279–292 (PHNVPVLFVLWNQQ).

It belongs to the PA-phosphatase related phosphoesterase family. In terms of processing, phosphorylation by PKC activates the phosphatase activity towards presqualene diphosphate.

Its subcellular location is the endoplasmic reticulum membrane. It localises to the nucleus envelope. The protein localises to the nucleus inner membrane. It catalyses the reaction presqualene diphosphate + H2O = presqualene phosphate + phosphate + H(+). The enzyme catalyses presqualene phosphate + H2O = presqualene alcohol + phosphate. It carries out the reaction (2E,6E)-farnesyl diphosphate + H2O = (2E,6E)-farnesyl phosphate + phosphate + H(+). The catalysed reaction is (2E,6E)-farnesyl phosphate + H2O = (2E,6E)-farnesol + phosphate. It catalyses the reaction (2E,6E,10E)-geranylgeranyl diphosphate + H2O = (2E,6E,10E)-geranylgeranyl phosphate + phosphate + H(+). The enzyme catalyses (2E,6E,10E)-geranylgeranyl phosphate + H2O = (2E,6E,10E)-geranylgeraniol + phosphate. It carries out the reaction (2E)-geranyl diphosphate + H2O = (2E)-geranyl phosphate + phosphate + H(+). The catalysed reaction is (2E)-geranyl phosphate + H2O = (2E)-geraniol + phosphate. It catalyses the reaction 1,2-dihexadecanoyl-sn-glycero-3-phosphate + H2O = 1,2-dihexadecanoyl-sn-glycerol + phosphate. Functionally, magnesium-independent polyisoprenoid diphosphatase that catalyzes the sequential dephosphorylation of presqualene, farnesyl, geranyl and geranylgeranyl diphosphates. Functions in the innate immune response through the dephosphorylation of presqualene diphosphate which acts as a potent inhibitor of the signaling pathways contributing to polymorphonuclear neutrophils activation. May regulate the biosynthesis of cholesterol and related sterols by dephosphorylating presqualene and farnesyl diphosphate, two key intermediates in this biosynthetic pathway. May also play a role in protein prenylation by acting on farnesyl diphosphate and its derivative geranylgeranyl diphosphate, two precursors for the addition of isoprenoid anchors to membrane proteins. Has a lower activity towards phosphatidic acid (PA), but through phosphatidic acid dephosphorylation may participate in the biosynthesis of phospholipids and triacylglycerols. May also act on ceramide-1-P, lysophosphatidic acid (LPA) and sphing-4-enine 1-phosphate/sphingosine-1-phosphate. The chain is Polyisoprenoid diphosphate/phosphate phosphohydrolase PLPP6 from Mus musculus (Mouse).